Consider the following 272-residue polypeptide: ATP synthase subunit a (272 aa).

Transmembrane regions (helical) follow at residues Thr41–Phe61, Leu101–Leu121, Asp147–Ile167, Leu212–Trp232, and Ala243–Val263.

It belongs to the ATPase A chain family. In terms of assembly, F-type ATPases have 2 components, CF(1) - the catalytic core - and CF(0) - the membrane proton channel. CF(1) has five subunits: alpha(3), beta(3), gamma(1), delta(1), epsilon(1). CF(0) has three main subunits: a(1), b(2) and c(9-12). The alpha and beta chains form an alternating ring which encloses part of the gamma chain. CF(1) is attached to CF(0) by a central stalk formed by the gamma and epsilon chains, while a peripheral stalk is formed by the delta and b chains.

Its subcellular location is the cell inner membrane. In terms of biological role, key component of the proton channel; it plays a direct role in the translocation of protons across the membrane. This is ATP synthase subunit a from Cronobacter sakazakii (strain ATCC BAA-894) (Enterobacter sakazakii).